Reading from the N-terminus, the 329-residue chain is Pantothenate kinase (329 aa).

107–114 (GSVAVGKS) is a binding site for ATP.

It belongs to the prokaryotic pantothenate kinase family.

The protein resides in the cytoplasm. It carries out the reaction (R)-pantothenate + ATP = (R)-4'-phosphopantothenate + ADP + H(+). It functions in the pathway cofactor biosynthesis; coenzyme A biosynthesis; CoA from (R)-pantothenate: step 1/5. This Streptomyces avermitilis (strain ATCC 31267 / DSM 46492 / JCM 5070 / NBRC 14893 / NCIMB 12804 / NRRL 8165 / MA-4680) protein is Pantothenate kinase.